Reading from the N-terminus, the 131-residue chain is Fluoride-specific ion channel FluC 1 (131 aa).

3 helical membrane-spanning segments follow: residues 38–58 (FPLS…IAMM), 69–89 (TVMM…TALN), and 108–128 (IATV…ALLA). 2 residues coordinate Na(+): glycine 79 and serine 82.

Belongs to the fluoride channel Fluc/FEX (TC 1.A.43) family.

The protein resides in the cell membrane. It carries out the reaction fluoride(in) = fluoride(out). Na(+) is not transported, but it plays an essential structural role and its presence is essential for fluoride channel function. Fluoride-specific ion channel. Important for reducing fluoride concentration in the cell, thus reducing its toxicity. The sequence is that of Fluoride-specific ion channel FluC 1 from Bifidobacterium longum (strain NCC 2705).